A 1452-amino-acid polypeptide reads, in one-letter code: ABC-type transporter adrC (1452 aa).

Residues 1–38 are disordered; sequence MAPEEGDQAMSHEDKAACSSLNTTSSTELFDGAPSSEN. A compositionally biased stretch (polar residues) spans 19 to 28; that stretch reads SSLNTTSSTE. Positions 116–378 constitute an ABC transporter 1 domain; it reads KRLMSIVGNK…FETMGWKRPP (263 aa). The next 6 helical transmembrane spans lie at 487–507, 524–544, 569–589, 598–618, 631–651, and 738–758; these read IPAL…IGSL, VLFL…TTLY, VIVD…IVYF, SHFF…ATIF, AMAL…FTVP, and GILV…TELI. Residues 813-1055 form the ABC transporter 2 domain; sequence FSWKGLSYDI…TVLEYLEDKG (243 aa). 849–856 lines the ATP pocket; the sequence is GVSGAGKT. The next 7 membrane-spanning stretches (helical) occupy residues 1149–1169, 1181–1201, 1224–1244, 1264–1284, 1287–1307, 1322–1344, and 1415–1435; these read YILA…FSFW, VLFS…QIMP, VFIL…GICT, LVLL…QLVV, VPSV…CLLF, IFMN…ALHG, and FGIF…LYYL.

This sequence belongs to the ABC transporter superfamily. ABCG family. PDR (TC 3.A.1.205) subfamily.

The protein localises to the membrane. In terms of biological role, ABC-type transporter; part of the gene cluster that mediates the biosynthesis of the meroterpenoid compound andrastin A, a promising antitumoral compound. Is required for the production of andrastin A but does not have a significant role in its secretion. The protein is ABC-type transporter adrC of Penicillium roqueforti.